Reading from the N-terminus, the 538-residue chain is Telomerase Cajal body protein 1 (538 aa).

The tract at residues 1-53 (MKTSEERLVVPDSLSSDQAPAPVPQGSPVDENTDSEPVPQPCGGDDRSQVAAD) is disordered. Serine 27 and serine 87 each carry phosphoserine. The segment at 92-128 (EQELSENVSLPVEDTNQPELASGEDVEGVSEEPGPVD) is disordered. A compositionally biased stretch (acidic residues) spans 113 to 128 (SGEDVEGVSEEPGPVD). WD repeat units follow at residues 154 to 194 (AHSE…YSAT), 210 to 255 (EGDT…LRAS), 260 to 301 (NHLD…RDCE), 311 to 352 (GQSG…ALLG), 353 to 393 (GHQG…HLLW), and 399 to 438 (VTTN…GDSS). 2 disordered regions span residues 471 to 491 (QRMF…GDLP) and 509 to 538 (CGGG…DGLI). A Phosphothreonine modification is found at threonine 478. At serine 480 the chain carries Phosphoserine. Gly residues predominate over residues 529-538 (RAEGCGDGLI).

Belongs to the TCAB1 family. As to quaternary structure, component of the telomerase holoenzyme complex composed of one molecule of TERT, one molecule of WRAP53/TCAB1, two molecules of H/ACA ribonucleoprotein complex subunits DKC1, NOP10, NHP2 and GAR1, and a telomerase RNA template component (TERC). The telomerase holoenzyme complex is associated with TEP1, SMG6/EST1A and POT1. Interacts with the chaperonin-containing T-complex (TRiC) complex; which mediates the folding of WRAP53/TCAB1. Interacts with COIL. Interacts with SMN1. Interacts with RNF8. Interacts with histone H2AX. As to expression, preferentially expressed in testis.

The protein resides in the nucleus. It is found in the cajal body. The protein localises to the chromosome. It localises to the telomere. Its function is as follows. RNA chaperone that plays a key role in telomere maintenance and RNA localization to Cajal bodies. Specifically recognizes and binds the Cajal body box (CAB box) present in both small Cajal body RNAs (scaRNAs) and telomerase RNA template component (TERC). Essential component of the telomerase holoenzyme complex, a ribonucleoprotein complex essential for the replication of chromosome termini that elongates telomeres in most eukaryotes. In the telomerase holoenzyme complex, required to stimulate the catalytic activity of the complex. Acts by specifically binding the CAB box of the TERC RNA and controlling the folding of the CR4/CR5 region of the TERC RNA, a critical step for telomerase activity. In addition, also controls telomerase holoenzyme complex localization to Cajal body. During S phase, required for delivery of TERC to telomeres during S phase and for telomerase activity. In addition to its role in telomere maintenance, also required for Cajal body formation, probably by mediating localization of scaRNAs to Cajal bodies. Also plays a role in DNA repair: relocalizes to sites of DNA double-strand breaks in response to DNA damage and promotes the repair of DNA double-strand breaks. Acts by recruiting the ubiquitin ligase RNF8 to DNA breaks and promote both homologous recombination (HR) and non-homologous end joining (NHEJ). The protein is Telomerase Cajal body protein 1 of Mesocricetus auratus (Golden hamster).